We begin with the raw amino-acid sequence, 235 residues long: Attacin-E (235 aa).

An N-terminal signal peptide occupies residues 1-19 (MFGKIVFLLLVALCAGVQS). Residues 20 to 47 (RYLIVSEPVYYIEHYEEPELLASSRVRR) constitute a propeptide that is removed on maturation.

Belongs to the attacin/sarcotoxin-2 family. Attacin F appears to be derived by proteolytic digestion of attacin E.

It is found in the secreted. Its function is as follows. Hemolymph antibacterial protein. This Hyalophora cecropia (Cecropia moth) protein is Attacin-E.